The chain runs to 146 residues: UPF0178 protein CTC_02403 (146 aa).

This sequence belongs to the UPF0178 family.

This chain is UPF0178 protein CTC_02403, found in Clostridium tetani (strain Massachusetts / E88).